The primary structure comprises 328 residues: Diacetylchitobiose uptake system permease protein DasB (328 aa).

Positions 1–27 (MTVQTERPPSGPSDVRKADGGGTGGTR) are disordered. A run of 6 helical transmembrane segments spans residues 36–56 (ALAP…LLGW), 104–124 (IIFT…IGLL), 134–154 (FVLM…ATTV), 188–208 (FSTF…FVAI), 247–267 (FLYA…VQVY), and 297–317 (MGAA…AYYL). One can recognise an ABC transmembrane type-1 domain in the interval 100-316 (TVRSIIFTAV…LILLGLTAYY (217 aa)).

This sequence belongs to the binding-protein-dependent transport system permease family. In terms of assembly, the complex is composed of two ATP-binding proteins (MsiK), two transmembrane proteins (DasB and DasC) and a solute-binding protein (DasA).

The protein resides in the cell membrane. Part of the ABC transporter complex DasABC-MsiK involved in N,N'-diacetylchitobiose ((GlcNAc)2) uptake. Responsible for the translocation of the substrate across the membrane. The protein is Diacetylchitobiose uptake system permease protein DasB of Streptomyces coelicolor (strain ATCC BAA-471 / A3(2) / M145).